The chain runs to 133 residues: uncharacterized protein (133 aa).

Positions 9–128 (RILVYSDNVQ…VLGRTVLSLL (120 aa)) constitute a Response regulatory domain. Residue aspartate 64 is modified to 4-aspartylphosphate.

This is an uncharacterized protein from Mycobacterium tuberculosis (strain CDC 1551 / Oshkosh).